Here is a 101-residue protein sequence, read N- to C-terminus: Urease subunit beta (101 aa).

The protein belongs to the urease beta subunit family. As to quaternary structure, heterotrimer of UreA (gamma), UreB (beta) and UreC (alpha) subunits. Three heterotrimers associate to form the active enzyme.

Its subcellular location is the cytoplasm. It carries out the reaction urea + 2 H2O + H(+) = hydrogencarbonate + 2 NH4(+). It participates in nitrogen metabolism; urea degradation; CO(2) and NH(3) from urea (urease route): step 1/1. This chain is Urease subunit beta, found in Dechloromonas aromatica (strain RCB).